A 572-amino-acid polypeptide reads, in one-letter code: Probable inactive glycosyltransferase 25 family member 3 (572 aa).

N-linked (GlcNAc...) asparagine glycans are attached at residues Asn52, Asn130, Asn214, and Asn337. The Prevents secretion from ER signature appears at 569–572; it reads RDEL.

This sequence belongs to the glycosyltransferase 25 family.

The protein resides in the endoplasmic reticulum lumen. Probable cell adhesion protein involved in leukocyte transmigration across the blood-brain barrier. Does not express any beta-galactosyltransferase activity in vitro. This is Probable inactive glycosyltransferase 25 family member 3 (Cercam) from Rattus norvegicus (Rat).